A 588-amino-acid polypeptide reads, in one-letter code: Sentrin-specific protease 2 (588 aa).

The Nuclear localization signal signature appears at 28–31 (KRRR). Ser-32 is modified (phosphoserine). A Nuclear localization signal motif is present at residues 47–52 (PAKRPR). A disordered region spans residues 157–184 (EGYNRRPSGRRHSKSNPESSLTWKPQEQ). The span at 172 to 184 (NPESSLTWKPQEQ) shows a compositional bias: polar residues. A Nuclear export signal motif is present at residues 316 to 331 (MEPDLSEEVSARLRLG). Phosphoserine occurs at positions 332 and 343. Positions 394 to 558 (LRITRGDIQT…MFTCKYADYI (165 aa)) are protease. Catalysis depends on residues His-477 and Asp-494. The Nucleophile role is filled by Cys-547.

Belongs to the peptidase C48 family. In terms of assembly, binds to SUMO2 and SUMO3. Interacts with the C-terminal domain of NUP153 via its N-terminus. Interacts with MTA1. Post-translationally, polyubiquitinated; which leads to proteasomal degradation. In terms of tissue distribution, highly expressed in testis. Detected in brain, heart and thymus.

The protein resides in the nucleus. It is found in the nuclear pore complex. It localises to the nucleus membrane. Its subcellular location is the cytoplasm. The protein localises to the cytoplasmic vesicle. The protein resides in the PML body. Its function is as follows. Protease that catalyzes two essential functions in the SUMO pathway. The first is the hydrolysis of an alpha-linked peptide bond at the C-terminal end of the small ubiquitin-like modifier (SUMO) propeptides, SUMO1, SUMO2 and SUMO3 leading to the mature form of the proteins. The second is the deconjugation of SUMO1, SUMO2 and SUMO3 from targeted proteins, by cleaving an epsilon-linked peptide bond between the C-terminal glycine of the mature SUMO and the lysine epsilon-amino group of the target protein. May down-regulate CTNNB1 levels and thereby modulate the Wnt pathway. Deconjugates SUMO2 from MTA1. Plays a dynamic role in adipogenesis by desumoylating and promoting the stabilization of CEBPB. Acts as a regulator of the cGAS-STING pathway by catalyzing desumoylation of CGAS and STING1 during the late phase of viral infection. Functionally, activates transcription. The polypeptide is Sentrin-specific protease 2 (Senp2) (Mus musculus (Mouse)).